Consider the following 215-residue polypeptide: uncharacterized protein (215 aa).

An N-terminal signal peptide occupies residues M1–G17. Residues G17–N110 form a disordered region. C18 is lipidated: N-palmitoyl cysteine. C18 carries S-diacylglycerol cysteine lipidation. The span at E25 to K69 shows a compositional bias: basic and acidic residues. Residues E70 to I95 are compositionally biased toward polar residues. Residues S96–N110 show a composition bias toward low complexity.

Its subcellular location is the cell membrane. This is an uncharacterized protein from Staphylococcus epidermidis (strain ATCC 12228 / FDA PCI 1200).